Consider the following 267-residue polypeptide: Cilia- and flagella-associated protein 300 (267 aa).

This sequence belongs to the CFAP300 family. In terms of assembly, interacts with DNAAF2.

The protein resides in the cytoplasm. It localises to the cytoskeleton. The protein localises to the cilium axoneme. Cilium- and flagellum-specific protein that plays a role in axonemal structure organization and motility. May play a role in outer and inner dynein arm assembly. The sequence is that of Cilia- and flagella-associated protein 300 from Rattus norvegicus (Rat).